A 249-amino-acid polypeptide reads, in one-letter code: UPF0758 protein Oant_1909 (249 aa).

In terms of domain architecture, MPN spans 127 to 249 (VLGSWNKVIE…HASFRGLGLI (123 aa)). Positions 198, 200, and 211 each coordinate Zn(2+). The JAMM motif signature appears at 198–211 (HNHPSGDPTPSRAD).

This sequence belongs to the UPF0758 family.

This is UPF0758 protein Oant_1909 from Brucella anthropi (strain ATCC 49188 / DSM 6882 / CCUG 24695 / JCM 21032 / LMG 3331 / NBRC 15819 / NCTC 12168 / Alc 37) (Ochrobactrum anthropi).